The primary structure comprises 345 residues: Phosphate acyltransferase (345 aa).

It belongs to the PlsX family. In terms of assembly, homodimer. Probably interacts with PlsY.

Its subcellular location is the cytoplasm. The enzyme catalyses a fatty acyl-[ACP] + phosphate = an acyl phosphate + holo-[ACP]. The protein operates within lipid metabolism; phospholipid metabolism. Its function is as follows. Catalyzes the reversible formation of acyl-phosphate (acyl-PO(4)) from acyl-[acyl-carrier-protein] (acyl-ACP). This enzyme utilizes acyl-ACP as fatty acyl donor, but not acyl-CoA. In Wolbachia sp. subsp. Drosophila simulans (strain wRi), this protein is Phosphate acyltransferase.